A 508-amino-acid chain; its full sequence is MSASALSSIRFPGSISEYLQVASVLSLLLLLFKTAQLYLHRQWLLSSTQQFPSPPSHWLFGHKILKDQDLQDILTRIKNFPSACPQWLWGSKVRIQVYDPDYMKLILGRSDPKAHGSYRFLAPWIGRGLLLLDGQTWFQHRRMLTPAFHYDILKPYTEIMADSVHVMLDKWEQIVGQDSTLEIFQHITLMTLDTIMKCAFSHEGSVQLDRKYKSYIQAVEDLNNLFFLRVRNIFHQNDIIYRVSSNGCLANSACQLAHDHTDQVIKSRRSQLQDEEELEKLKKKRRLDFLDILLFARMENGKSLSDKDLRAEVDTFMFEGHDTTASGISWIFYALATNPEHQQRCRKEIQSLLGDGASITWNDLDKMPYTTMCIKEALRIYPPVPSVSRELSSPVTFPDGRSLPKGIHVMLSFYGLHHNPTVWPNPEVFDPSRFAPGSSRHSHSFLPFSGGARNCIGKQFAMNELKVAVALTLLRFELLPDPTRVPIPIPRIVLKSKNGIHLHLKKLQ.

An N-terminal signal peptide occupies residues 1–37 (MSASALSSIRFPGSISEYLQVASVLSLLLLLFKTAQL). Residues glutamate 319 and cysteine 455 each contribute to the heme site.

The protein belongs to the cytochrome P450 family. It depends on heme as a cofactor. As to expression, expressed in lung, but almost undetectable in the kidneys of five different strains.

The protein localises to the endoplasmic reticulum membrane. It is found in the microsome membrane. The enzyme catalyses an organic molecule + reduced [NADPH--hemoprotein reductase] + O2 = an alcohol + oxidized [NADPH--hemoprotein reductase] + H2O + H(+). The catalysed reaction is dodecanoate + reduced [NADPH--hemoprotein reductase] + O2 = 11-hydroxydodecanoate + oxidized [NADPH--hemoprotein reductase] + H2O + H(+). It catalyses the reaction dodecanoate + reduced [NADPH--hemoprotein reductase] + O2 = 12-hydroxydodecanoate + oxidized [NADPH--hemoprotein reductase] + H2O + H(+). It carries out the reaction (5Z,8Z,11Z,14Z)-eicosatetraenoate + reduced [NADPH--hemoprotein reductase] + O2 = 18-hydroxy-(5Z,8Z,11Z,14Z)-eicosatetraenoate + oxidized [NADPH--hemoprotein reductase] + H2O + H(+). The enzyme catalyses (5Z,8Z,11Z,14Z)-eicosatetraenoate + reduced [NADPH--hemoprotein reductase] + O2 = 19-hydroxy-(5Z,8Z,11Z,14Z)-eicosatetraenoate + oxidized [NADPH--hemoprotein reductase] + H2O + H(+). The catalysed reaction is (5Z,8Z,11Z,14Z)-eicosatetraenoate + reduced [NADPH--hemoprotein reductase] + O2 = 20-hydroxy-(5Z,8Z,11Z,14Z)-eicosatetraenoate + oxidized [NADPH--hemoprotein reductase] + H2O + H(+). It catalyses the reaction (5Z,8Z,11Z,14Z,17Z)-eicosapentaenoate + reduced [NADPH--hemoprotein reductase] + O2 = 19-hydroxy-(5Z,8Z,11Z,14Z,17Z)-eicosapentaenoate + oxidized [NADPH--hemoprotein reductase] + H2O + H(+). It carries out the reaction (5Z,8Z,11Z,14Z,17Z)-eicosapentaenoate + reduced [NADPH--hemoprotein reductase] + O2 = 20-hydroxy-(5Z,8Z,11Z,14Z,17Z)-eicosapentaenoate + oxidized [NADPH--hemoprotein reductase] + H2O + H(+). The enzyme catalyses (5Z,8Z,11Z,14Z,17Z)-eicosapentaenoate + reduced [NADPH--hemoprotein reductase] + O2 = (17S,18R)-epoxy-(5Z,8Z,11Z,14Z)-eicosatetraenoate + oxidized [NADPH--hemoprotein reductase] + H2O + H(+). The catalysed reaction is (5Z,8Z,11Z,14Z,17Z)-eicosapentaenoate + reduced [NADPH--hemoprotein reductase] + O2 = (17R,18S)-epoxy-(5Z,8Z,11Z,14Z)-eicosatetraenoate + oxidized [NADPH--hemoprotein reductase] + H2O + H(+). Its pathway is lipid metabolism; fatty acid metabolism. Activated by cytochrome b5. The Vmax almost doubles in the presence of cytochrome b5. Its function is as follows. A cytochrome P450 monooxygenase involved in the metabolism of fatty acids and their oxygenated derivatives (oxylipins). Mechanistically, uses molecular oxygen inserting one oxygen atom into a substrate, and reducing the second into a water molecule, with two electrons provided by NADPH via cytochrome P450 reductase (CPR; NADPH-ferrihemoprotein reductase). Catalyzes predominantly the oxidation of the terminal carbon (omega-oxidation) of saturated and unsaturated fatty acids. May act as a major omega-hydroxylase for dodecanoic (lauric) acid in kidney. Participates in omega-hydroxylation of (5Z,8Z,11Z,14Z)-eicosatetraenoic acid (arachidonate) to 20-hydroxyeicosatetraenoic acid (20-HETE), a signaling molecule acting both as vasoconstrictive and natriuretic with overall effect on arterial blood pressure. Acts as an omega-hydroxylase and epoxidase toward (5Z,8Z,11Z,14Z,17Z)-eicosapentaenoc acid (EPA). Catalyzes the epoxidation of the last double bond of EPA with no preferred stereoselectivity, producing both (R,S) and (S,R) stereoisomers. Can also catalyze the omega-1 and omega-2 oxidation of fatty acids with lower efficiency. The chain is Cytochrome P450 4A12B from Mus musculus (Mouse).